The chain runs to 320 residues: Protoheme IX farnesyltransferase (320 aa).

The segment at 1-24 (MSMITERPVSDPAGQSVSATGDGA) is disordered. Transmembrane regions (helical) follow at residues 33–55 (AVVA…VTTV), 68–88 (LWLM…ASVL), 117–137 (NALI…AVFT), 140–160 (LAAG…TAWL), 183–203 (WAAV…VVFF), 241–261 (ILVF…LGAG), 262–282 (MGPI…VEAH), and 300–320 (FHWS…DALI).

Belongs to the UbiA prenyltransferase family. Protoheme IX farnesyltransferase subfamily.

It localises to the cell membrane. It catalyses the reaction heme b + (2E,6E)-farnesyl diphosphate + H2O = Fe(II)-heme o + diphosphate. It participates in porphyrin-containing compound metabolism; heme O biosynthesis; heme O from protoheme: step 1/1. Converts heme B (protoheme IX) to heme O by substitution of the vinyl group on carbon 2 of heme B porphyrin ring with a hydroxyethyl farnesyl side group. This chain is Protoheme IX farnesyltransferase, found in Salinispora tropica (strain ATCC BAA-916 / DSM 44818 / JCM 13857 / NBRC 105044 / CNB-440).